Here is a 62-residue protein sequence, read N- to C-terminus: Photosystem II reaction center protein Z (62 aa).

The next 2 membrane-spanning stretches (helical) occupy residues 8–28 (AVFA…VVLA) and 41–61 (FSGA…NSLI).

This sequence belongs to the PsbZ family. In terms of assembly, PSII is composed of 1 copy each of membrane proteins PsbA, PsbB, PsbC, PsbD, PsbE, PsbF, PsbH, PsbI, PsbJ, PsbK, PsbL, PsbM, PsbT, PsbY, PsbZ, Psb30/Ycf12, at least 3 peripheral proteins of the oxygen-evolving complex and a large number of cofactors. It forms dimeric complexes.

It localises to the plastid. Its subcellular location is the chloroplast thylakoid membrane. May control the interaction of photosystem II (PSII) cores with the light-harvesting antenna, regulates electron flow through the 2 photosystem reaction centers. PSII is a light-driven water plastoquinone oxidoreductase, using light energy to abstract electrons from H(2)O, generating a proton gradient subsequently used for ATP formation. The sequence is that of Photosystem II reaction center protein Z from Huperzia lucidula (Shining clubmoss).